Reading from the N-terminus, the 347-residue chain is Ceramide very long chain fatty acid hydroxylase scs7 (347 aa).

Topologically, residues 1-156 (MASVTSEKCV…GNFLEPLTKT (156 aa)) are cytoplasmic. Residues 157 to 177 (PWYMIPLIWVPCVTYGFLYAC) form a helical membrane-spanning segment. Position 178 (threonine 178) is a topological domain, lumenal. The helical transmembrane segment at 179-199 (GIPFSVAITFFIIGLFTWTLV) threads the bilayer. The Cytoplasmic portion of the chain corresponds to 200–238 (EYTMHRFLFHLDEYTPDHPIFLTMHFAFHGCHHFLPADK). Zn(2+) contacts are provided by histidine 204, histidine 209, histidine 228, histidine 231, and histidine 232. A helical transmembrane segment spans residues 239 to 259 (YRLVMPPALFLIFATPWYHFI). Glutamine 260 is a topological domain (lumenal). Residues 261 to 281 (LVLPHYIGVAGFSGAILGYVF) form a helical membrane-spanning segment. Residues 282–347 (YDLTHYFLHH…EQGKISTKAK (66 aa)) are Cytoplasmic-facing. The Zn(2+) site is built by histidine 286, histidine 290, histidine 306, histidine 309, and histidine 310.

This sequence belongs to the sterol desaturase family. SCS7 subfamily. Zn(2+) serves as cofactor.

Its subcellular location is the endoplasmic reticulum membrane. It participates in sphingolipid metabolism. Ceramide hydroxylase involved in the hydroxylation of sphingolipid-associated very long chain fatty acids. Postulated to hydroxylate the very long chain fatty acid of dihydroceramides and phytoceramides at C-2. In Schizosaccharomyces pombe (strain 972 / ATCC 24843) (Fission yeast), this protein is Ceramide very long chain fatty acid hydroxylase scs7.